Here is a 53-residue protein sequence, read N- to C-terminus: Sec-independent protein translocase protein TatA (53 aa).

The helical transmembrane segment at methionine 1–alanine 21 threads the bilayer.

Belongs to the TatA/E family. The Tat system comprises two distinct complexes: a TatABC complex, containing multiple copies of TatA, TatB and TatC subunits, and a separate TatA complex, containing only TatA subunits. Substrates initially bind to the TatABC complex, which probably triggers association of the separate TatA complex to form the active translocon.

It localises to the cell inner membrane. Functionally, part of the twin-arginine translocation (Tat) system that transports large folded proteins containing a characteristic twin-arginine motif in their signal peptide across membranes. TatA could form the protein-conducting channel of the Tat system. The sequence is that of Sec-independent protein translocase protein TatA from Rickettsia akari (strain Hartford).